The following is a 504-amino-acid chain: Pyruvate kinase (504 aa).

Arginine 53 is a binding site for substrate. Residues asparagine 55, serine 57, aspartate 88, and threonine 89 each coordinate K(+). Position 55-58 (55-58 (NFSH)) interacts with ATP. The ATP site is built by arginine 95 and lysine 181. Residue glutamate 246 participates in Mg(2+) binding. Residues glycine 269, aspartate 270, and threonine 302 each contribute to the substrate site. Aspartate 270 contacts Mg(2+).

Belongs to the pyruvate kinase family. As to quaternary structure, homotetramer. It depends on Mg(2+) as a cofactor. Requires K(+) as cofactor.

The enzyme catalyses pyruvate + ATP = phosphoenolpyruvate + ADP + H(+). It functions in the pathway carbohydrate degradation; glycolysis; pyruvate from D-glyceraldehyde 3-phosphate: step 5/5. In Debaryomyces hansenii (strain ATCC 36239 / CBS 767 / BCRC 21394 / JCM 1990 / NBRC 0083 / IGC 2968) (Yeast), this protein is Pyruvate kinase (PYK1).